Here is a 639-residue protein sequence, read N- to C-terminus: Protein phosphatase EYA4 (639 aa).

Methionine 1 is subject to N-acetylmethionine. 3 disordered regions span residues 1 to 72, 210 to 232, and 300 to 368; these read MEDS…GGEN, QTQS…PQPG, and ADGT…DSDL. Lysine 14 is covalently cross-linked (Glycyl lysine isopeptide (Lys-Gly) (interchain with G-Cter in SUMO2)). The span at 18 to 30 shows a compositional bias: polar residues; that stretch reads ESDVSQSQNSRSM. Residue lysine 52 forms a Glycyl lysine isopeptide (Lys-Gly) (interchain with G-Cter in SUMO2) linkage. The segment covering 56–66 has biased composition (low complexity); the sequence is SNLSSTSVTTN. The span at 300–334 shows a compositional bias: polar residues; the sequence is ADGTPSSTSTYQLQESLPGLTNQPGEFDTMQSPST. Serine 361 bears the Phosphoserine mark. Aspartate 375 (nucleophile) is an active-site residue. 3 residues coordinate Mg(2+): aspartate 375, aspartate 377, and aspartate 603. The active-site Proton donor is the aspartate 377.

Belongs to the HAD-like hydrolase superfamily. EYA family. Interacts with SIX3; translocates EYA4 from the cytoplasm to the nucleus and promotes activation of their target genes. Mg(2+) serves as cofactor. As to expression, highly expressed in heart and skeletal muscle.

It localises to the cytoplasm. It is found in the nucleus. The catalysed reaction is O-phospho-L-tyrosyl-[protein] + H2O = L-tyrosyl-[protein] + phosphate. Functionally, tyrosine phosphatase that specifically dephosphorylates 'Tyr-142' of histone H2AX (H2AXY142ph). 'Tyr-142' phosphorylation of histone H2AX plays a central role in DNA repair and acts as a mark that distinguishes between apoptotic and repair responses to genotoxic stress. Promotes efficient DNA repair by dephosphorylating H2AX, promoting the recruitment of DNA repair complexes containing MDC1. Its function as histone phosphatase probably explains its role in transcription regulation during organogenesis. May be involved in development of the eye. This is Protein phosphatase EYA4 (EYA4) from Homo sapiens (Human).